Reading from the N-terminus, the 463-residue chain is Argininosuccinate lyase (463 aa).

Belongs to the lyase 1 family. Argininosuccinate lyase subfamily.

It is found in the cytoplasm. It carries out the reaction 2-(N(omega)-L-arginino)succinate = fumarate + L-arginine. Its pathway is amino-acid biosynthesis; L-arginine biosynthesis; L-arginine from L-ornithine and carbamoyl phosphate: step 3/3. This is Argininosuccinate lyase from Staphylococcus epidermidis (strain ATCC 35984 / DSM 28319 / BCRC 17069 / CCUG 31568 / BM 3577 / RP62A).